Reading from the N-terminus, the 263-residue chain is Probable HTH-type transcriptional regulator ArcR (263 aa).

An HTH iclR-type domain is found at 14–74; the sequence is ITSVLNAVEI…DGDGTYQLGD (61 aa). Positions 35-54 form a DNA-binding region, H-T-H motif; it reads LQELTTELDLTKATIHTYMA. The 174-residue stretch at 89 to 262 folds into the IclR-ED domain; it reads LYRLGREEID…ANIIEVRLET (174 aa).

Its function is as follows. Probably regulates transcription of the arcABC operon. The chain is Probable HTH-type transcriptional regulator ArcR (arcR) from Halobacterium salinarum (strain ATCC 29341 / DSM 671 / R1).